The primary structure comprises 275 residues: Putative rhamnulose-1-phosphate aldolase (275 aa).

The active site involves E117. H141, H143, and H212 together coordinate Zn(2+).

This sequence belongs to the aldolase class II family. RhaD subfamily. Homotetramer. Zn(2+) is required as a cofactor.

Its subcellular location is the cytoplasm. The catalysed reaction is L-rhamnulose 1-phosphate = (S)-lactaldehyde + dihydroxyacetone phosphate. It participates in carbohydrate degradation; L-rhamnose degradation; glycerone phosphate from L-rhamnose: step 3/3. Its function is as follows. Catalyzes the reversible cleavage of L-rhamnulose-1-phosphate to dihydroxyacetone phosphate (DHAP) and L-lactaldehyde. The sequence is that of Putative rhamnulose-1-phosphate aldolase from Salmonella typhi.